Here is a 109-residue protein sequence, read N- to C-terminus: Large ribosomal subunit protein uL22 (109 aa).

It belongs to the universal ribosomal protein uL22 family. In terms of assembly, part of the 50S ribosomal subunit.

Functionally, this protein binds specifically to 23S rRNA; its binding is stimulated by other ribosomal proteins, e.g. L4, L17, and L20. It is important during the early stages of 50S assembly. It makes multiple contacts with different domains of the 23S rRNA in the assembled 50S subunit and ribosome. Its function is as follows. The globular domain of the protein is located near the polypeptide exit tunnel on the outside of the subunit, while an extended beta-hairpin is found that lines the wall of the exit tunnel in the center of the 70S ribosome. This Wolinella succinogenes (strain ATCC 29543 / DSM 1740 / CCUG 13145 / JCM 31913 / LMG 7466 / NCTC 11488 / FDC 602W) (Vibrio succinogenes) protein is Large ribosomal subunit protein uL22.